Consider the following 81-residue polypeptide: RNA-binding protein Hfq (81 aa).

The Sm domain occupies 10–69 (DPFLNTLRKEHVPVSIYLVNGIKLQGQVDSFDQYVILLKNTVTQMVYKHAISTIVPGRAV).

This sequence belongs to the Hfq family. Homohexamer.

In terms of biological role, RNA chaperone that binds small regulatory RNA (sRNAs) and mRNAs to facilitate mRNA translational regulation in response to envelope stress, environmental stress and changes in metabolite concentrations. Also binds with high specificity to tRNAs. The protein is RNA-binding protein Hfq of Methylobacillus flagellatus (strain ATCC 51484 / DSM 6875 / VKM B-1610 / KT).